A 121-amino-acid chain; its full sequence is uncharacterized protein (121 aa).

The next 3 membrane-spanning stretches (helical) occupy residues 26 to 46, 57 to 77, and 90 to 110; these read YACS…AVAT, SIPL…SVLI, and SFCF…LLCV.

The protein resides in the membrane. This is an uncharacterized protein from Saccharomyces cerevisiae (strain ATCC 204508 / S288c) (Baker's yeast).